The primary structure comprises 122 residues: Large ribosomal subunit protein uL14 (122 aa).

Belongs to the universal ribosomal protein uL14 family. Part of the 50S ribosomal subunit. Forms a cluster with proteins L3 and L19. In the 70S ribosome, L14 and L19 interact and together make contacts with the 16S rRNA in bridges B5 and B8.

Its function is as follows. Binds to 23S rRNA. Forms part of two intersubunit bridges in the 70S ribosome. This is Large ribosomal subunit protein uL14 from Bacillus mycoides (strain KBAB4) (Bacillus weihenstephanensis).